The following is a 286-amino-acid chain: MDPVPSTQTQKWPGKHADLDPEPSLLRYCDGRVHVGSGKLAEKKTLLTGGDSGIGKAAAVMFAREGSDLVISCLPEERDDAEVTRDLIEREGRNCWIWEGKLDKSDNCRDLVDFALKKLGWIDVLVNNIAYQQVAQSIEDIDDEQWDLTFKTNIFSFFWVTKAAISHMKSGSSIVNCSSINAYVGRPDLLDYTSTKGAITAFTRGLSNQYAQHGIRVNAVAPGPIYTPLVSSTFPKEKIELSDQVPLGRMGQPVEVASCYLFLACSDGGYMTGQTLHPNGGTVINN.

NADP(+) contacts are provided by I54, N128, and K162. The Proton donor role is filled by S178. Residues Y192, K196, I225, and T227 each contribute to the NADP(+) site. The Proton acceptor role is filled by Y192. K196 functions as the Lowers pKa of active site Tyr in the catalytic mechanism.

The protein belongs to the short-chain dehydrogenases/reductases (SDR) family.

This is an uncharacterized protein from Schizosaccharomyces pombe (strain 972 / ATCC 24843) (Fission yeast).